Consider the following 99-residue polypeptide: Aspartyl/glutamyl-tRNA(Asn/Gln) amidotransferase subunit C (99 aa).

This sequence belongs to the GatC family. In terms of assembly, heterotrimer of A, B and C subunits.

The catalysed reaction is L-glutamyl-tRNA(Gln) + L-glutamine + ATP + H2O = L-glutaminyl-tRNA(Gln) + L-glutamate + ADP + phosphate + H(+). It carries out the reaction L-aspartyl-tRNA(Asn) + L-glutamine + ATP + H2O = L-asparaginyl-tRNA(Asn) + L-glutamate + ADP + phosphate + 2 H(+). Allows the formation of correctly charged Asn-tRNA(Asn) or Gln-tRNA(Gln) through the transamidation of misacylated Asp-tRNA(Asn) or Glu-tRNA(Gln) in organisms which lack either or both of asparaginyl-tRNA or glutaminyl-tRNA synthetases. The reaction takes place in the presence of glutamine and ATP through an activated phospho-Asp-tRNA(Asn) or phospho-Glu-tRNA(Gln). The polypeptide is Aspartyl/glutamyl-tRNA(Asn/Gln) amidotransferase subunit C (Macrococcus caseolyticus (strain JCSC5402) (Macrococcoides caseolyticum)).